The primary structure comprises 224 residues: Protein DEHYDRATION-INDUCED 19 homolog 4 (224 aa).

A compositionally biased stretch (polar residues) spans 1 to 12 (MDSNWINCPSVF). The disordered stretch occupies residues 1 to 23 (MDSNWINCPSVFSSSSSSSRRCQ). Residues 13–23 (SSSSSSSRRCQ) show a composition bias toward low complexity. A Phosphothreonine modification is found at Thr117.

This sequence belongs to the Di19 family. In terms of processing, phosphorylated in vitro by CPK3 or CPK11. In terms of tissue distribution, expressed in seedlings, roots, leaves, stems, flowers and siliques.

Its subcellular location is the cytoplasm. It is found in the perinuclear region. The protein is Protein DEHYDRATION-INDUCED 19 homolog 4 (DI19-4) of Arabidopsis thaliana (Mouse-ear cress).